A 1435-amino-acid polypeptide reads, in one-letter code: MGARASVLSAGELDKWEKIRLRPGGKKQYRLKHIVWASRELERFAVDPGLLETSEGCRQILGQLQPSLQTGSEELRSLYNTVATLYCVHQKIEVKDTKEALEKIEEEQNKSKKKAQQAAADTGNSSQVSQNYPIVQNLQGQMVHQAISPRTLNAWVKVVEEKAFSPEVIPMFSALSEGATPQDLNTMLNTVGGHQAAMQMLKETINEEAAEWDRLHPVHAGPIAPGQMREPRGSDIAGTTSTLQEQIGWMTNNPPIPVGEIYKRWIILGLNKIVRMYSPTSILDIRQGPKEPFRDYVDRFYKTLRAEQASQEVKNWMTETLLVQNANPDCKTILKALGPAATLEEMMTACQGVGGPGHKARVLAEAMSQVTNSATIMMQRGNFRNQRKTVKCFNCGKEGHIAKNCRAPRKKGCWKCGKEGHQMKDCTERQANFLREDLAFPQGKARKFSSEQTRANSPIRRERQVWRRDNNSLSEAGADRQGTVSFSFPQITLWQRPLVTIKIGGQLKEALLDTGADDTVLEEMNLPGRWKPKMIGGIGGFIKVRQYDQIPIEICGHKAIGTVLVGPTPVNIIGRNLLTQIGCTLNFPISPIETVPVKLKPGMDGPKVKQWPLTEEKIKALVEICTEMEKEGKISKIGPENPYNTPVFAIKKKDSTKWRKLVDFRELNKRTQDFWEVQLGIPHPAGLKKKKSVTVLDVGDAYFSVPLHEDFRKYTAFTIPSINNETPGTRYQYNVLPQGWKGSPAIFQSSMTTILEPFRKQNPDLVIYQYMDDLYVGSDLEIGQHRTKIEELRQHLLRWGFTTPDKKHQKEPPFLWMGYELHPDKWTVQPIVLPEKDSWTVNDIQKLVGKLNWASQIYAGIKVRQLCKLLRGTKALTEVIPLTEEAELELAENREILKEPVHGVYYDPSKDLIAEIQKQGQGQWTYQIYQEPFKNLKTGKYARTRGAHTNDVKQLTEAVQKIATESIVIWGKTPKFKLPIQKETWETWWTEYWQATWIPEWEFVNTPPLVKLWYQLEKEPIIGAETFYVDGAANRETKLGKAGYVTNKGRQKVVSLTDTTNQKTELQAIYLALQDSGLEVNIVTDSQYALGIIQAQPDRSESELVSQIIEQLIKKEKVYLAWVPAHKGIGGNEQVDKLVSAGIRKVLFLDGIDKAQEEHEKYHSNWRAMASDFNLPPVVAKEIVASCDKCQLKGEAMHGQVDCSPGIWQLDCTHLEGKVILVAVHVASGYIEAEVIPAETGQETAYFLLKLAGRWPVTTIHTDNGSNFTSATVKAACWWAGIKQEFGIPYNPQSQGVVESMNKELKKIIGQVRDQAEHLKTAVQMAVFIHNFKRKGGIGGYSAGERIVDIIATDIQTKELQKQITKIQNFRVYYRDSRDPLWKGPAKLLWKGEGAVVIQDNSDIKVVPRRKAKIIRDYGKQMAGDDCVAGRQDED.

The N-myristoyl glycine; by host moiety is linked to residue G2. The interaction with Gp41 stretch occupies residues 7-31 (VLSAGELDKWEKIRLRPGGKKQYRL). Residues 8-43 (LSAGELDKWEKIRLRPGGKKQYRLKHIVWASRELER) form an interaction with host CALM1 region. Residues 12–19 (ELDKWEKI) are interaction with host AP3D1. The segment at 14–33 (DKWEKIRLRPGGKKQYRLKH) is interaction with membrane phosphatidylinositol 4,5-bisphosphate and RNA. Residues 16–22 (WEKIRLR) carry the Nuclear export signal motif. Positions 26–32 (KKQYRLK) match the Nuclear localization signal motif. Residues 73–77 (EELRS) are interaction with membrane phosphatidylinositol 4,5-bisphosphate. A disordered region spans residues 106 to 128 (EEQNKSKKKAQQAAADTGNSSQV). Phosphotyrosine; by host is present on Y132. Residues 189 to 227 (NTVGGHQAAMQMLKETINEEAAEWDRLHPVHAGPIAPGQ) form an interaction with human PPIA/CYPA and NUP153 region. The dimerization/Multimerization of capsid protein p24 stretch occupies residues 277-363 (YSPTSILDIR…GGPGHKARVL (87 aa)). CCHC-type zinc fingers lie at residues 390-407 (VKCF…NCRA) and 411-428 (KGCW…DCTE). Residues 489-493 (PQITL) are dimerization of protease. The Peptidase A2 domain maps to 508–577 (KEALLDTGAD…TPVNIIGRNL (70 aa)). The For protease activity; shared with dimeric partner role is filled by D513. Dimerization of protease stretches follow at residues 537-543 (GIGGFIK) and 576-588 (NLLT…LNFP). The Reverse transcriptase domain maps to 631–821 (EGKISKIGPE…PPFLWMGYEL (191 aa)). Mg(2+)-binding residues include D697, D772, and D773. Residues 814–822 (FLWMGYELH) form an RT 'primer grip' region. Positions 985–1001 (WETWWTEYWQATWIPEW) match the Tryptophan repeat motif motif. Positions 1021-1144 (IIGAETFYVD…VDKLVSAGIR (124 aa)) constitute an RNase H type-1 domain. D1030, E1065, D1085, and D1136 together coordinate Mg(2+). Residues 1150-1191 (DGIDKAQEEHEKYHSNWRAMASDFNLPPVVAKEIVASCDKCQ) form an Integrase-type zinc finger. Residues H1159, H1163, C1187, and C1190 each contribute to the Zn(2+) site. In terms of domain architecture, Integrase catalytic spans 1201-1351 (VDCSPGIWQL…SAGERIVDII (151 aa)). Mg(2+) is bound by residues D1211, D1263, and E1299. Positions 1370–1417 (FRVYYRDSRDPLWKGPAKLLWKGEGAVVIQDNSDIKVVPRRKAKIIRD) form a DNA-binding region, integrase-type.

Homotrimer; further assembles as hexamers of trimers. Interacts with gp41 (via C-terminus). Interacts with host CALM1; this interaction induces a conformational change in the Matrix protein, triggering exposure of the myristate group. Interacts with host AP3D1; this interaction allows the polyprotein trafficking to multivesicular bodies during virus assembly. Part of the pre-integration complex (PIC) which is composed of viral genome, matrix protein, Vpr and integrase. In terms of assembly, homodimer; the homodimer further multimerizes as homohexamers or homopentamers. Interacts with human PPIA/CYPA; This interaction stabilizes the capsid. Interacts with human NUP153. Interacts with host PDZD8; this interaction stabilizes the capsid. Interacts with monkey TRIM5; this interaction destabilizes the capsid. As to quaternary structure, homodimer, whose active site consists of two apposed aspartic acid residues. Heterodimer of p66 RT and p51 RT (RT p66/p51). Heterodimerization of RT is essential for DNA polymerase activity. The overall folding of the subdomains is similar in p66 RT and p51 RT but the spatial arrangements of the subdomains are dramatically different. In terms of assembly, homotetramer; may further associate as a homohexadecamer. Part of the pre-integration complex (PIC) which is composed of viral genome, matrix protein, Vpr and integrase. Interacts with human SMARCB1/INI1 and human PSIP1/LEDGF isoform 1. Interacts with human KPNA3; this interaction might play a role in nuclear import of the pre-integration complex. Interacts with human NUP153; this interaction might play a role in nuclear import of the pre-integration complex. Requires Mg(2+) as cofactor. Post-translationally, specific enzymatic cleavages by the viral protease yield mature proteins. The protease is released by autocatalytic cleavage. The polyprotein is cleaved during and after budding, this process is termed maturation. Proteolytic cleavage of p66 RT removes the RNase H domain to yield the p51 RT subunit. Nucleocapsid protein p7 might be further cleaved after virus entry. Tyrosine phosphorylated presumably in the virion by a host kinase. Phosphorylation is apparently not a major regulator of membrane association. In terms of processing, phosphorylated possibly by host MAPK1; this phosphorylation is necessary for Pin1-mediated virion uncoating. Post-translationally, methylated by host PRMT6, impairing its function by reducing RNA annealing and the initiation of reverse transcription.

It localises to the host cell membrane. Its subcellular location is the host endosome. The protein resides in the host multivesicular body. The protein localises to the virion membrane. It is found in the host nucleus. It localises to the host cytoplasm. Its subcellular location is the virion. It carries out the reaction Specific for a P1 residue that is hydrophobic, and P1' variable, but often Pro.. It catalyses the reaction Endohydrolysis of RNA in RNA/DNA hybrids. Three different cleavage modes: 1. sequence-specific internal cleavage of RNA. Human immunodeficiency virus type 1 and Moloney murine leukemia virus enzymes prefer to cleave the RNA strand one nucleotide away from the RNA-DNA junction. 2. RNA 5'-end directed cleavage 13-19 nucleotides from the RNA end. 3. DNA 3'-end directed cleavage 15-20 nucleotides away from the primer terminus.. The enzyme catalyses 3'-end directed exonucleolytic cleavage of viral RNA-DNA hybrid.. The catalysed reaction is DNA(n) + a 2'-deoxyribonucleoside 5'-triphosphate = DNA(n+1) + diphosphate. Protease: The viral protease is inhibited by many synthetic protease inhibitors (PIs), such as amprenavir, atazanavir, indinavir, loprinavir, nelfinavir, ritonavir and saquinavir. Use of protease inhibitors in tritherapy regimens permit more ambitious therapeutic strategies. Reverse transcriptase/ribonuclease H: RT can be inhibited either by nucleoside RT inhibitors (NRTIs) or by non nucleoside RT inhibitors (NNRTIs). NRTIs act as chain terminators, whereas NNRTIs inhibit DNA polymerization by binding a small hydrophobic pocket near the RT active site and inducing an allosteric change in this region. Classical NRTIs are abacavir, adefovir (PMEA), didanosine (ddI), lamivudine (3TC), stavudine (d4T), tenofovir (PMPA), zalcitabine (ddC), and zidovudine (AZT). Classical NNRTIs are atevirdine (BHAP U-87201E), delavirdine, efavirenz (DMP-266), emivirine (I-EBU), and nevirapine (BI-RG-587). The tritherapies used as a basic effective treatment of AIDS associate two NRTIs and one NNRTI. Its function is as follows. Mediates, with Gag polyprotein, the essential events in virion assembly, including binding the plasma membrane, making the protein-protein interactions necessary to create spherical particles, recruiting the viral Env proteins, and packaging the genomic RNA via direct interactions with the RNA packaging sequence (Psi). Gag-Pol polyprotein may regulate its own translation, by the binding genomic RNA in the 5'-UTR. At low concentration, the polyprotein would promote translation, whereas at high concentration, the polyprotein would encapsidate genomic RNA and then shut off translation. Targets the polyprotein to the plasma membrane via a multipartite membrane-binding signal, that includes its myristoylated N-terminus. Matrix protein is part of the pre-integration complex. Implicated in the release from host cell mediated by Vpu. Binds to RNA. Functionally, forms the conical core that encapsulates the genomic RNA-nucleocapsid complex in the virion. Most core are conical, with only 7% tubular. The core is constituted by capsid protein hexamer subunits. The core is disassembled soon after virion entry. Host restriction factors such as TRIM5-alpha or TRIMCyp bind retroviral capsids and cause premature capsid disassembly, leading to blocks in reverse transcription. Capsid restriction by TRIM5 is one of the factors which restricts HIV-1 to the human species. Host PIN1 apparently facilitates the virion uncoating. On the other hand, interactions with PDZD8 or CYPA stabilize the capsid. In terms of biological role, encapsulates and protects viral dimeric unspliced genomic RNA (gRNA). Binds these RNAs through its zinc fingers. Acts as a nucleic acid chaperone which is involved in rearangement of nucleic acid secondary structure during gRNA retrotranscription. Also facilitates template switch leading to recombination. As part of the polyprotein, participates in gRNA dimerization, packaging, tRNA incorporation and virion assembly. Its function is as follows. Aspartyl protease that mediates proteolytic cleavages of Gag and Gag-Pol polyproteins during or shortly after the release of the virion from the plasma membrane. Cleavages take place as an ordered, step-wise cascade to yield mature proteins. This process is called maturation. Displays maximal activity during the budding process just prior to particle release from the cell. Also cleaves Nef and Vif, probably concomitantly with viral structural proteins on maturation of virus particles. Hydrolyzes host EIF4GI and PABP1 in order to shut off the capped cellular mRNA translation. The resulting inhibition of cellular protein synthesis serves to ensure maximal viral gene expression and to evade host immune response. Also mediates cleavage of host YTHDF3. Mediates cleavage of host CARD8, thereby activating the CARD8 inflammasome, leading to the clearance of latent HIV-1 in patient CD4(+) T-cells after viral reactivation; in contrast, HIV-1 can evade CARD8-sensing when its protease remains inactive in infected cells prior to viral budding. Multifunctional enzyme that converts the viral RNA genome into dsDNA in the cytoplasm, shortly after virus entry into the cell. This enzyme displays a DNA polymerase activity that can copy either DNA or RNA templates, and a ribonuclease H (RNase H) activity that cleaves the RNA strand of RNA-DNA heteroduplexes in a partially processive 3' to 5' endonucleasic mode. Conversion of viral genomic RNA into dsDNA requires many steps. A tRNA(3)-Lys binds to the primer-binding site (PBS) situated at the 5'-end of the viral RNA. RT uses the 3' end of the tRNA primer to perform a short round of RNA-dependent minus-strand DNA synthesis. The reading proceeds through the U5 region and ends after the repeated (R) region which is present at both ends of viral RNA. The portion of the RNA-DNA heteroduplex is digested by the RNase H, resulting in a ssDNA product attached to the tRNA primer. This ssDNA/tRNA hybridizes with the identical R region situated at the 3' end of viral RNA. This template exchange, known as minus-strand DNA strong stop transfer, can be either intra- or intermolecular. RT uses the 3' end of this newly synthesized short ssDNA to perform the RNA-dependent minus-strand DNA synthesis of the whole template. RNase H digests the RNA template except for two polypurine tracts (PPTs) situated at the 5'-end and near the center of the genome. It is not clear if both polymerase and RNase H activities are simultaneous. RNase H probably can proceed both in a polymerase-dependent (RNA cut into small fragments by the same RT performing DNA synthesis) and a polymerase-independent mode (cleavage of remaining RNA fragments by free RTs). Secondly, RT performs DNA-directed plus-strand DNA synthesis using the PPTs that have not been removed by RNase H as primers. PPTs and tRNA primers are then removed by RNase H. The 3' and 5' ssDNA PBS regions hybridize to form a circular dsDNA intermediate. Strand displacement synthesis by RT to the PBS and PPT ends produces a blunt ended, linear dsDNA copy of the viral genome that includes long terminal repeats (LTRs) at both ends. Functionally, catalyzes viral DNA integration into the host chromosome, by performing a series of DNA cutting and joining reactions. This enzyme activity takes place after virion entry into a cell and reverse transcription of the RNA genome in dsDNA. The first step in the integration process is 3' processing. This step requires a complex comprising the viral genome, matrix protein, Vpr and integrase. This complex is called the pre-integration complex (PIC). The integrase protein removes 2 nucleotides from each 3' end of the viral DNA, leaving recessed CA OH's at the 3' ends. In the second step, the PIC enters cell nucleus. This process is mediated through integrase and Vpr proteins, and allows the virus to infect a non dividing cell. This ability to enter the nucleus is specific of lentiviruses, other retroviruses cannot and rely on cell division to access cell chromosomes. In the third step, termed strand transfer, the integrase protein joins the previously processed 3' ends to the 5' ends of strands of target cellular DNA at the site of integration. The 5'-ends are produced by integrase-catalyzed staggered cuts, 5 bp apart. A Y-shaped, gapped, recombination intermediate results, with the 5'-ends of the viral DNA strands and the 3' ends of target DNA strands remaining unjoined, flanking a gap of 5 bp. The last step is viral DNA integration into host chromosome. This involves host DNA repair synthesis in which the 5 bp gaps between the unjoined strands are filled in and then ligated. Since this process occurs at both cuts flanking the HIV genome, a 5 bp duplication of host DNA is produced at the ends of HIV-1 integration. Alternatively, Integrase may catalyze the excision of viral DNA just after strand transfer, this is termed disintegration. In Homo sapiens (Human), this protein is Gag-Pol polyprotein (gag-pol).